Reading from the N-terminus, the 54-residue chain is Large ribosomal subunit protein eL37 (54 aa).

Zn(2+)-binding residues include cysteine 20, cysteine 23, cysteine 35, and cysteine 38. The C4-type zinc finger occupies 20 to 38; it reads CRRCGHHTYNVRTKRCSHC.

Belongs to the eukaryotic ribosomal protein eL37 family. Zn(2+) serves as cofactor.

Its function is as follows. Binds to the 23S rRNA. This is Large ribosomal subunit protein eL37 (rpl37e) from Thermoplasma volcanium (strain ATCC 51530 / DSM 4299 / JCM 9571 / NBRC 15438 / GSS1).